The following is a 166-amino-acid chain: Large ribosomal subunit protein uL10 (166 aa).

It belongs to the universal ribosomal protein uL10 family. In terms of assembly, part of the ribosomal stalk of the 50S ribosomal subunit. The N-terminus interacts with L11 and the large rRNA to form the base of the stalk. The C-terminus forms an elongated spine to which L12 dimers bind in a sequential fashion forming a multimeric L10(L12)X complex.

Functionally, forms part of the ribosomal stalk, playing a central role in the interaction of the ribosome with GTP-bound translation factors. This is Large ribosomal subunit protein uL10 from Listeria innocua serovar 6a (strain ATCC BAA-680 / CLIP 11262).